Consider the following 72-residue polypeptide: Translation initiation factor IF-1 (72 aa).

The 72-residue stretch at 1–72 (MAKEDVIEMQ…SKGRIVFRAR (72 aa)) folds into the S1-like domain.

Belongs to the IF-1 family. In terms of assembly, component of the 30S ribosomal translation pre-initiation complex which assembles on the 30S ribosome in the order IF-2 and IF-3, IF-1 and N-formylmethionyl-tRNA(fMet); mRNA recruitment can occur at any time during PIC assembly.

The protein localises to the cytoplasm. In terms of biological role, one of the essential components for the initiation of protein synthesis. Stabilizes the binding of IF-2 and IF-3 on the 30S subunit to which N-formylmethionyl-tRNA(fMet) subsequently binds. Helps modulate mRNA selection, yielding the 30S pre-initiation complex (PIC). Upon addition of the 50S ribosomal subunit IF-1, IF-2 and IF-3 are released leaving the mature 70S translation initiation complex. The chain is Translation initiation factor IF-1 from Vibrio cholerae serotype O1 (strain ATCC 39541 / Classical Ogawa 395 / O395).